Reading from the N-terminus, the 99-residue chain is Large ribosomal subunit protein eL21 (99 aa).

It belongs to the eukaryotic ribosomal protein eL21 family.

This Pyrobaculum calidifontis (strain DSM 21063 / JCM 11548 / VA1) protein is Large ribosomal subunit protein eL21.